The sequence spans 364 residues: 3-isopropylmalate dehydrogenase (364 aa).

NAD(+) is bound at residue 79-92 (GSKWDHLPEIEKPE). Substrate is bound by residues Arg100, Arg110, Arg139, and Asp227. Residues Asp227, Asp251, and Asp255 each contribute to the Mg(2+) site. An NAD(+)-binding site is contributed by 285–297 (GSAPNIAGKTIAN).

The protein belongs to the isocitrate and isopropylmalate dehydrogenases family. LeuB type 1 subfamily. Homodimer. The cofactor is Mg(2+). It depends on Mn(2+) as a cofactor.

Its subcellular location is the cytoplasm. The enzyme catalyses (2R,3S)-3-isopropylmalate + NAD(+) = 4-methyl-2-oxopentanoate + CO2 + NADH. Its pathway is amino-acid biosynthesis; L-leucine biosynthesis; L-leucine from 3-methyl-2-oxobutanoate: step 3/4. Its function is as follows. Catalyzes the oxidation of 3-carboxy-2-hydroxy-4-methylpentanoate (3-isopropylmalate) to 3-carboxy-4-methyl-2-oxopentanoate. The product decarboxylates to 4-methyl-2 oxopentanoate. This Buchnera aphidicola subsp. Thelaxes suberi protein is 3-isopropylmalate dehydrogenase.